A 361-amino-acid polypeptide reads, in one-letter code: Phospho-N-acetylmuramoyl-pentapeptide-transferase (361 aa).

10 helical membrane-spanning segments follow: residues 27 to 47 (GALF…ISLL), 72 to 92 (TPTM…FLWA), 99 to 119 (VWIT…DDYL), 139 to 159 (ALIA…GLAY), 169 to 189 (AIVN…VGAG), 200 to 220 (GLAI…AYLV), 240 to 260 (LAVV…FNAP), 264 to 284 (IFMG…VAVA), 289 to 309 (IVLA…IIQV), and 338 to 358 (QVVI…LATL).

Belongs to the glycosyltransferase 4 family. MraY subfamily. Mg(2+) serves as cofactor.

The protein localises to the cell inner membrane. The enzyme catalyses UDP-N-acetyl-alpha-D-muramoyl-L-alanyl-gamma-D-glutamyl-meso-2,6-diaminopimeloyl-D-alanyl-D-alanine + di-trans,octa-cis-undecaprenyl phosphate = di-trans,octa-cis-undecaprenyl diphospho-N-acetyl-alpha-D-muramoyl-L-alanyl-D-glutamyl-meso-2,6-diaminopimeloyl-D-alanyl-D-alanine + UMP. It functions in the pathway cell wall biogenesis; peptidoglycan biosynthesis. Catalyzes the initial step of the lipid cycle reactions in the biosynthesis of the cell wall peptidoglycan: transfers peptidoglycan precursor phospho-MurNAc-pentapeptide from UDP-MurNAc-pentapeptide onto the lipid carrier undecaprenyl phosphate, yielding undecaprenyl-pyrophosphoryl-MurNAc-pentapeptide, known as lipid I. This Methylobacterium sp. (strain 4-46) protein is Phospho-N-acetylmuramoyl-pentapeptide-transferase.